The chain runs to 428 residues: Tyrosine--tRNA ligase (428 aa).

L-tyrosine is bound at residue Y41. Residues 46–55 carry the 'HIGH' region motif; it reads PTADSLHLGH. The L-tyrosine site is built by Y179 and Q183. The 'KMSKS' region motif lies at 239–243; the sequence is KFGKT. K242 is an ATP binding site. The S4 RNA-binding domain maps to 361–418; sequence TDLMQALVDAELQPSRGQARKTIASNAVTINGEKQSDPEYIFNDEDRLFGRYTLLRRG.

The protein belongs to the class-I aminoacyl-tRNA synthetase family. TyrS type 1 subfamily. As to quaternary structure, homodimer.

It is found in the cytoplasm. It catalyses the reaction tRNA(Tyr) + L-tyrosine + ATP = L-tyrosyl-tRNA(Tyr) + AMP + diphosphate + H(+). Functionally, catalyzes the attachment of tyrosine to tRNA(Tyr) in a two-step reaction: tyrosine is first activated by ATP to form Tyr-AMP and then transferred to the acceptor end of tRNA(Tyr). The sequence is that of Tyrosine--tRNA ligase from Salmonella arizonae (strain ATCC BAA-731 / CDC346-86 / RSK2980).